A 523-amino-acid chain; its full sequence is Major facilitator-type transporter psiT2 (523 aa).

A compositionally biased stretch (polar residues) spans 1 to 26; the sequence is MSLERSTSPNPTERTSLLSDTASTIS. Positions 1–45 are disordered; that stretch reads MSLERSTSPNPTERTSLLSDTASTISSRDDVEQSSLKQRRTPIPT. The next 5 membrane-spanning stretches (helical) occupy residues 88-108, 125-145, 149-169, 175-195, and 221-241; these read FYSG…IFML, ALGI…TMML, VCAG…SELT, ALVV…GPLI, and FLPS…GYFF. Asn269 is a glycosylation site (N-linked (GlcNAc...) asparagine). A run of 3 helical transmembrane segments spans residues 317 to 337, 352 to 372, and 382 to 402; these read FLMF…FTAV, AFSV…PWVL, and HFCM…NPLA. N-linked (GlcNAc...) asparagine glycosylation occurs at Asn410. 3 helical membrane passes run 419–439, 455–474, and 488–508; these read GLLY…VMAF, LATA…AFCP, and NILG…VGVW.

This sequence belongs to the major facilitator superfamily. TCR/Tet family.

It localises to the membrane. In terms of biological role, major facilitator-type transporter; part of the gene cluster that mediates the biosynthesis of psilocybin, a psychotropic tryptamine-derived natural product. In Psilocybe cubensis (Psychedelic mushroom), this protein is Major facilitator-type transporter psiT2.